The following is a 307-amino-acid chain: Ornithine carbamoyltransferase (307 aa).

Residues 50-53 (STRT), Gln77, Arg101, and 128-131 (HPCQ) each bind carbamoyl phosphate. Residues Asn160, Asp224, and 228-229 (SM) contribute to the L-ornithine site. Carbamoyl phosphate contacts are provided by residues 264-265 (CL) and Arg292.

Belongs to the aspartate/ornithine carbamoyltransferase superfamily. OTCase family.

Its subcellular location is the cytoplasm. The enzyme catalyses carbamoyl phosphate + L-ornithine = L-citrulline + phosphate + H(+). Its pathway is amino-acid biosynthesis; L-arginine biosynthesis; L-arginine from L-ornithine and carbamoyl phosphate: step 1/3. Its activity is regulated as follows. Inhibited by arginine, norvaline. Its function is as follows. Reversibly catalyzes the transfer of the carbamoyl group from carbamoyl phosphate (CP) to the N(epsilon) atom of ornithine (ORN) to produce L-citrulline, which is a substrate for argininosuccinate synthetase, the enzyme involved in the final step in arginine biosynthesis. This Mycolicibacterium smegmatis (strain ATCC 700084 / mc(2)155) (Mycobacterium smegmatis) protein is Ornithine carbamoyltransferase.